Here is a 223-residue protein sequence, read N- to C-terminus: ATP phosphoribosyltransferase (223 aa).

It belongs to the ATP phosphoribosyltransferase family. Short subfamily. In terms of assembly, heteromultimer composed of HisG and HisZ subunits.

Its subcellular location is the cytoplasm. The enzyme catalyses 1-(5-phospho-beta-D-ribosyl)-ATP + diphosphate = 5-phospho-alpha-D-ribose 1-diphosphate + ATP. The protein operates within amino-acid biosynthesis; L-histidine biosynthesis; L-histidine from 5-phospho-alpha-D-ribose 1-diphosphate: step 1/9. Functionally, catalyzes the condensation of ATP and 5-phosphoribose 1-diphosphate to form N'-(5'-phosphoribosyl)-ATP (PR-ATP). Has a crucial role in the pathway because the rate of histidine biosynthesis seems to be controlled primarily by regulation of HisG enzymatic activity. The sequence is that of ATP phosphoribosyltransferase from Desulfitobacterium hafniense (strain Y51).